Here is a 243-residue protein sequence, read N- to C-terminus: Adenine phosphoribosyltransferase 1, chloroplastic (243 aa).

The N-terminal 52 residues, M1–S52, are a transit peptide targeting the chloroplast. Residue Q2 is modified to N-acetylalanine.

The protein belongs to the purine/pyrimidine phosphoribosyltransferase family. Homodimer.

The protein resides in the plastid. The protein localises to the chloroplast. Its subcellular location is the cytoplasm. The enzyme catalyses AMP + diphosphate = 5-phospho-alpha-D-ribose 1-diphosphate + adenine. It participates in purine metabolism; AMP biosynthesis via salvage pathway; AMP from adenine: step 1/1. Functionally, catalyzes a salvage reaction resulting in the formation of AMP, that is energically less costly than de novo synthesis. Contributes primarily to the recycling of adenine into adenylate nucleotides, but is also involved in the inactivation of cytokinins by phosphoribosylation. Catalyzes the conversion of cytokinins from free bases (active form) to the corresponding nucleotides (inactive form). This is Adenine phosphoribosyltransferase 1, chloroplastic (APT1) from Arabidopsis thaliana (Mouse-ear cress).